The primary structure comprises 328 residues: Tetraacyldisaccharide 4'-kinase (328 aa).

Position 55–62 (55–62 (TAGGNGKT)) interacts with ATP.

Belongs to the LpxK family.

The catalysed reaction is a lipid A disaccharide + ATP = a lipid IVA + ADP + H(+). It functions in the pathway glycolipid biosynthesis; lipid IV(A) biosynthesis; lipid IV(A) from (3R)-3-hydroxytetradecanoyl-[acyl-carrier-protein] and UDP-N-acetyl-alpha-D-glucosamine: step 6/6. Functionally, transfers the gamma-phosphate of ATP to the 4'-position of a tetraacyldisaccharide 1-phosphate intermediate (termed DS-1-P) to form tetraacyldisaccharide 1,4'-bis-phosphate (lipid IVA). In Escherichia coli O17:K52:H18 (strain UMN026 / ExPEC), this protein is Tetraacyldisaccharide 4'-kinase.